We begin with the raw amino-acid sequence, 182 residues long: ATP synthase subunit delta (182 aa).

This sequence belongs to the ATPase delta chain family. As to quaternary structure, F-type ATPases have 2 components, F(1) - the catalytic core - and F(0) - the membrane proton channel. F(1) has five subunits: alpha(3), beta(3), gamma(1), delta(1), epsilon(1). CF(0) has four main subunits: a(1), b(1), b'(1) and c(10-14). The alpha and beta chains form an alternating ring which encloses part of the gamma chain. F(1) is attached to F(0) by a central stalk formed by the gamma and epsilon chains, while a peripheral stalk is formed by the delta, b and b' chains.

Its subcellular location is the cellular thylakoid membrane. Its function is as follows. F(1)F(0) ATP synthase produces ATP from ADP in the presence of a proton or sodium gradient. F-type ATPases consist of two structural domains, F(1) containing the extramembraneous catalytic core and F(0) containing the membrane proton channel, linked together by a central stalk and a peripheral stalk. During catalysis, ATP synthesis in the catalytic domain of F(1) is coupled via a rotary mechanism of the central stalk subunits to proton translocation. Functionally, this protein is part of the stalk that links CF(0) to CF(1). It either transmits conformational changes from CF(0) to CF(1) or is implicated in proton conduction. The protein is ATP synthase subunit delta of Parasynechococcus marenigrum (strain WH8102).